The sequence spans 185 residues: Dirigent protein 12 (185 aa).

The N-terminal stretch at 1 to 25 is a signal peptide; it reads MTNQIYKQVFSFFLSVLLLQSSTVS. A disulfide bridge links Cys37 with Cys184. N-linked (GlcNAc...) asparagine glycosylation is found at Asn56 and Asn120.

It belongs to the plant dirigent protein family. In terms of assembly, homodimer. Seed coat specific expression.

It localises to the secreted. Its subcellular location is the extracellular space. It is found in the apoplast. In terms of biological role, dirigent proteins impart stereoselectivity on the phenoxy radical-coupling reaction, yielding optically active lignans from two molecules of coniferyl alcohol in the biosynthesis of lignans, flavonolignans, and alkaloids and thus plays a central role in plant secondary metabolism. Required for seed accumulation of neolignans. This chain is Dirigent protein 12 (DIR12), found in Arabidopsis thaliana (Mouse-ear cress).